Here is a 234-residue protein sequence, read N- to C-terminus: Ribosomal RNA small subunit methyltransferase G (234 aa).

S-adenosyl-L-methionine-binding residues include glycine 85, phenylalanine 90, and arginine 155.

The protein belongs to the methyltransferase superfamily. RNA methyltransferase RsmG family.

It localises to the cytoplasm. The catalysed reaction is guanosine(527) in 16S rRNA + S-adenosyl-L-methionine = N(7)-methylguanosine(527) in 16S rRNA + S-adenosyl-L-homocysteine. Specifically methylates the N7 position of guanine in position 527 of 16S rRNA. In Rhodopseudomonas palustris (strain BisB18), this protein is Ribosomal RNA small subunit methyltransferase G.